The chain runs to 339 residues: WAT1-related protein At5g40210 (339 aa).

Transmembrane regions (helical) follow at residues 11–31 (GWILTAMVVTEFSNVGVNTLV), 42–62 (FVVLVYSYTFGSLLLLPLTFF), 74–94 (FSILCNMGILGLIASAFQILG), 104–124 (TLSSAMSNVNPAFTFILAVVF), 140–160 (VLGTILSIIGALVVTLYHGPM), 168–188 (WIIGGGLLALQYILVSVSYLV), 200–220 (VVVTLVHNVCIAVVCAFVSLL), 233–253 (FDITLITVVATGILNSGYYVI), 266–286 (LSMFKPLSILIAAVSTFIFLG), and 289–309 (LYLGSVMGGILISIGFYMVLW). Positions 29-154 (TLVKAATSKG…LSIIGALVVT (126 aa)) constitute an EamA domain.

It belongs to the drug/metabolite transporter (DMT) superfamily. Plant drug/metabolite exporter (P-DME) (TC 2.A.7.4) family.

Its subcellular location is the membrane. This is WAT1-related protein At5g40210 from Arabidopsis thaliana (Mouse-ear cress).